A 364-amino-acid chain; its full sequence is Probable mannose-1-phosphate guanylyltransferase 2 (364 aa).

GDP-alpha-D-mannose-binding residues include L6 and V7. Positions 9, 11, 12, 13, and 23 each coordinate diphosphate. Residues G88, N112, D114, G149, and N176 each contribute to the GDP-alpha-D-mannose site.

The protein belongs to the transferase hexapeptide repeat family.

The enzyme catalyses alpha-D-mannose 1-phosphate + GTP + H(+) = GDP-alpha-D-mannose + diphosphate. The protein operates within nucleotide-sugar biosynthesis; GDP-alpha-D-mannose biosynthesis; GDP-alpha-D-mannose from alpha-D-mannose 1-phosphate (GTP route): step 1/1. In terms of biological role, catalyzes a reaction of the Smirnoff-Wheeler pathway, the major route to ascorbate biosynthesis in plants. This is Probable mannose-1-phosphate guanylyltransferase 2 from Arabidopsis thaliana (Mouse-ear cress).